A 188-amino-acid chain; its full sequence is Large ribosomal subunit protein eL18 (188 aa).

Lys119 participates in a covalent cross-link: Glycyl lysine isopeptide (Lys-Gly) (interchain with G-Cter in SUMO2). A Phosphoserine modification is found at Ser130. The tract at residues 150 to 188 (RHFGKAPGTPHSHTKPYVRSKGRKFERARGRRASRGYKN) is disordered. A Phosphothreonine modification is found at Thr158. Basic residues-rich tracts occupy residues 161–171 (SHTKPYVRSKG) and 178–188 (RGRRASRGYKN). A Glycyl lysine isopeptide (Lys-Gly) (interchain with G-Cter in SUMO2) cross-link involves residue Lys164.

The protein belongs to the eukaryotic ribosomal protein eL18 family. Component of the large ribosomal subunit.

Its subcellular location is the cytoplasm. It localises to the cytosol. The protein resides in the rough endoplasmic reticulum. Its function is as follows. Component of the large ribosomal subunit. The ribosome is a large ribonucleoprotein complex responsible for the synthesis of proteins in the cell. This Rattus norvegicus (Rat) protein is Large ribosomal subunit protein eL18 (Rpl18).